The primary structure comprises 1012 residues: Vacuolar protein-sorting protein bro-1 (1012 aa).

Residues 5-407 (PMISVPLKAT…ERVETANSEM (403 aa)) form the BRO1 domain. Residues 301 to 330 (ILADATKRHLATVKEKLEELNKENDMIYHQ) are a coiled coil. A disordered region spans residues 558-578 (RKSRKSNPNSPATVEPNLLEA). The stretch at 719-775 (LQSAKNWYKDMRQEAESLEKNVEAFVNNRRAEGAQLLNQIEQDRAANKSSHAALEQE) forms a coiled coil. 2 disordered regions span residues 784-812 (MSMD…SFAP) and 827-1012 (NFST…SAWK). Residues 827 to 842 (NFSTQYPASPPATQVP) show a composition bias toward polar residues. Over residues 844 to 857 (NPGGQQQTPYQQYN) the composition is skewed to low complexity. A compositionally biased stretch (polar residues) spans 892–913 (QTSFAQSRPYSLTTYGNPSALN). Residues 914 to 930 (PQGGQPQQSQPGGYVPP) show a composition bias toward low complexity. Residues 931-945 (GFVPPPPPPGPPPLG) show a composition bias toward pro residues. Residues 970-985 (PGSGQQGPQGQQGGWG) are compositionally biased toward gly residues.

This sequence belongs to the BRO1 family.

It is found in the cytoplasm. The protein localises to the endosome. Its function is as follows. Involved in concentration and sorting of cargo proteins of the multivesicular body (MVB) for incorporation into intralumenal vesicles. This Neurospora crassa (strain ATCC 24698 / 74-OR23-1A / CBS 708.71 / DSM 1257 / FGSC 987) protein is Vacuolar protein-sorting protein bro-1 (bro-1).